Consider the following 97-residue polypeptide: MGEVNIAPLGDRIIVKPIEREVMKSGIIIPDTAKEKPMEGEVVAAGPGKLGEKGERAPMDVKKGDKVLYGKYSGTEVKINDKNYLIMHQDDVLGIIK.

It belongs to the GroES chaperonin family. As to quaternary structure, heptamer of 7 subunits arranged in a ring. Interacts with the chaperonin GroEL.

Its subcellular location is the cytoplasm. Functionally, together with the chaperonin GroEL, plays an essential role in assisting protein folding. The GroEL-GroES system forms a nano-cage that allows encapsulation of the non-native substrate proteins and provides a physical environment optimized to promote and accelerate protein folding. GroES binds to the apical surface of the GroEL ring, thereby capping the opening of the GroEL channel. The sequence is that of Co-chaperonin GroES from Elusimicrobium minutum (strain Pei191).